A 556-amino-acid chain; its full sequence is Potassium-transporting ATPase potassium-binding subunit (556 aa).

10 helical membrane passes run A6–G26, G65–G85, G133–V153, L176–I196, P249–P269, Y283–F303, G378–G398, Y419–G439, A483–A503, and F526–L546.

This sequence belongs to the KdpA family. As to quaternary structure, the system is composed of three essential subunits: KdpA, KdpB and KdpC.

It is found in the cell membrane. Its function is as follows. Part of the high-affinity ATP-driven potassium transport (or Kdp) system, which catalyzes the hydrolysis of ATP coupled with the electrogenic transport of potassium into the cytoplasm. This subunit binds the extracellular potassium ions and delivers the ions to the membrane domain of KdpB through an intramembrane tunnel. In Mycolicibacterium paratuberculosis (strain ATCC BAA-968 / K-10) (Mycobacterium paratuberculosis), this protein is Potassium-transporting ATPase potassium-binding subunit.